A 1082-amino-acid polypeptide reads, in one-letter code: RhoGEF domain-containing protein gxcI (1082 aa).

Over residues 1 to 15 (MRKNSTSNPSPSHQF) the composition is skewed to polar residues. Disordered regions lie at residues 1–29 (MRKNSTSNPSPSHQFLTPPKNTTTVVNNN), 59–78 (DKNQQQQQQQQQQTHQVLPQ), 91–394 (YNEQ…VTSL), 438–488 (KQAS…SVSN), and 504–524 (INSFNSDDSNNSNNSNSSLSL). Composition is skewed to low complexity over residues 20-29 (KNTTTVVNNN), 62-71 (QQQQQQQQQQ), 96-109 (PSSSSSTASSSSSP), 116-160 (LLST…SGSP), and 170-184 (PTILSPLPSPRRQLP). Residues 185–206 (TRPPSPLPKLPSRPTSPVPPNP) are compositionally biased toward pro residues. Positions 211 to 244 (NTTTTNNNNNNNNNNNNNNNNNNNNNNNNNNNNN) are enriched in low complexity. Residues 262 to 276 (PIPPPNDKPAPPPRP) are compositionally biased toward pro residues. Over residues 282 to 366 (TLTTPPTIAT…NNNNNSNNNK (85 aa)) the composition is skewed to low complexity. Positions 367–379 (PLPPTSTKPPRPK) are enriched in pro residues. Positions 450–473 (SSLSLSTTPTSVSPSTPSSANPTP) are enriched in low complexity. A DH domain is found at 622–817 (SFNKVIKEII…EKIVNDINGK (196 aa)). Positions 838–994 (QQLRDQTFLK…NDIDEAINIL (157 aa)) are PH-like. Disordered stretches follow at residues 920-961 (NNNN…NSTP) and 1017-1060 (NNNN…NSNN).

Its function is as follows. GTPase-activating protein. This is RhoGEF domain-containing protein gxcI (gxcI) from Dictyostelium discoideum (Social amoeba).